We begin with the raw amino-acid sequence, 224 residues long: Dimethyl sulfoxide reductase transcriptional activator (224 aa).

In terms of domain architecture, HTH bat-type spans 158-209 (LTDKQREAAAAAVAKGYYATPRGADLSDLATALGISKSAVSQRLSAVESKLA).

Its function is as follows. Involved in activating dmsEABCD gene expression related to dimethyl sulfoxide (DMSO) reductase. Required for anaerobic respiration on dimethyl sulfoxide (DMSO) and trimethylamine N-oxide (TMAO). The sequence is that of Dimethyl sulfoxide reductase transcriptional activator (dmsR) from Halobacterium salinarum (strain ATCC 700922 / JCM 11081 / NRC-1) (Halobacterium halobium).